The primary structure comprises 399 residues: Argonaute-binding protein 1 (399 aa).

As to quaternary structure, component of the argonaute siRNA chaperone (ARC) complex composed of ago1, arb1 and arb2. Interacts with ago1.

It is found in the nucleus. Its subcellular location is the cytoplasm. Its function is as follows. Component of the argonaute siRNA chaperone (ARC) complex which is required for histone H3K9 methylation, heterochromatin assembly and siRNA generation. The ARC complex contains mostly double-stranded siRNA. Inhibits the release of the siRNA passenger strand from ago1 together with arb2. Inhibits the slicer activity of ago1. Required for swi6 localization to the centromeric repeats. The protein is Argonaute-binding protein 1 (arb1) of Schizosaccharomyces pombe (strain 972 / ATCC 24843) (Fission yeast).